The following is a 551-amino-acid chain: Glutamate--tRNA ligase (551 aa).

A 'HIGH' region motif is present at residues 100-110 (PNPNGPPTLGS).

Belongs to the class-I aminoacyl-tRNA synthetase family. Glutamate--tRNA ligase type 2 subfamily.

The protein resides in the cytoplasm. It carries out the reaction tRNA(Glu) + L-glutamate + ATP = L-glutamyl-tRNA(Glu) + AMP + diphosphate. In terms of biological role, catalyzes the attachment of glutamate to tRNA(Glu) in a two-step reaction: glutamate is first activated by ATP to form Glu-AMP and then transferred to the acceptor end of tRNA(Glu). The protein is Glutamate--tRNA ligase of Archaeoglobus fulgidus (strain ATCC 49558 / DSM 4304 / JCM 9628 / NBRC 100126 / VC-16).